Here is a 784-residue protein sequence, read N- to C-terminus: Kinesin-like protein 6 (784 aa).

Residues 6–389 (SISVAVRVRP…LKYGNRAKNI (384 aa)) enclose the Kinesin motor domain. 134-141 (GATGCGKT) contributes to the ATP binding site. 2 coiled-coil regions span residues 405 to 440 (SEYV…EVRK) and 463 to 483 (RDLQ…EDEI). Positions 677 to 715 (SEVPTTSSVPPVEIKNKDSKPKVEKSLDKHNMNNDRSFL) are disordered. Positions 690–709 (IKNKDSKPKVEKSLDKHNMN) are enriched in basic and acidic residues.

This sequence belongs to the TRAFAC class myosin-kinesin ATPase superfamily. Kinesin family. Kinesin II subfamily. As to quaternary structure, heterodimer with klp5.

The protein resides in the cytoplasm. The protein localises to the cytoskeleton. It is found in the chromosome. It localises to the centromere. Its subcellular location is the kinetochore. The protein resides in the spindle. Functionally, has a role in establishing metaphase during mitosis. Required for chromosome segregation where it generates tension during kinetochore capturing. The polypeptide is Kinesin-like protein 6 (klp6) (Schizosaccharomyces pombe (strain 972 / ATCC 24843) (Fission yeast)).